Here is a 449-residue protein sequence, read N- to C-terminus: Chlorobenzene dioxygenase subunit alpha (449 aa).

The region spanning 54 to 163 is the Rieske domain; it reads WLLLGHETQI…VATYKGLIFA (110 aa). 4 residues coordinate [2Fe-2S] cluster: Cys96, His98, Cys116, and His119. Residues His222, His228, and Asp376 each contribute to the Fe cation site.

The protein belongs to the bacterial ring-hydroxylating dioxygenase alpha subunit family. This dioxygenase system consists of four proteins: the two subunits of the oxygenase component (TecA1 and TecA2), a ferredoxin (TecA3) and a ferredoxin reductase (TecA4). [2Fe-2S] cluster is required as a cofactor. Fe cation serves as cofactor.

The enzyme catalyses chlorobenzene + NADH + O2 + H(+) = (1R,2R)-3-chlorocyclohexa-3,5-diene-1,2-diol + NAD(+). It functions in the pathway aromatic compound metabolism. Part of the oxygenase component of the chlorobenzene dioxygenase system that catalyzes the dihydroxylation of a range of aromatic compounds, including chlorinated benzenes and toluenes, and dinuclear aromatics such as biphenyl and dibenzo-p-dioxin. The alpha subunit is responsible for substrate specificity. The polypeptide is Chlorobenzene dioxygenase subunit alpha (Cupriavidus sp. (strain PS12)).